Reading from the N-terminus, the 369-residue chain is Fructose-bisphosphate aldolase (369 aa).

Dihydroxyacetone phosphate is bound at residue aspartate 40. The D-glyceraldehyde 3-phosphate site is built by serine 42 and threonine 45. Arginine 49 contributes to the beta-D-fructose 1,6-bisphosphate binding site. Residue lysine 113 participates in D-glyceraldehyde 3-phosphate binding. Lysine 152 provides a ligand contact to dihydroxyacetone phosphate. Glutamate 195 contributes to the D-glyceraldehyde 3-phosphate binding site. Glutamate 195 acts as the Proton acceptor in catalysis. Dihydroxyacetone phosphate contacts are provided by lysine 237, serine 279, and glycine 280. The active-site Schiff-base intermediate with dihydroxyacetone phosphate is the lysine 237. Residues 279-281 (SGG) and serine 307 contribute to the beta-D-fructose 1,6-bisphosphate site. Positions 309 and 310 each coordinate dihydroxyacetone phosphate. Arginine 310 provides a ligand contact to beta-D-fructose 1,6-bisphosphate.

It belongs to the class I fructose-bisphosphate aldolase family. Homotetramer. Interacts with TRAP (via cytoplasmic domain); the interaction prevents substrate binding and thereby inhibits aldolase activity. Interacts with MTRAP (via cytoplasmic domain); MTRAP phosphorylation may increase the binding to FBPA. Interact with RH1 (via cytoplasmic domain). Interacts with RH2b (via cytoplasmic domain). Interacts with RH4 (via cytoplasmic domain). Interacts with AMA1 (via cytoplasmic domain); the interaction is weak, however it may be increased upon AMA1 phosphorylation. Interacts with EBA140 (via cytoplasmic domain); the interaction is weak. Interacts with EBA175 (via cytoplasmic domain); the interaction is weak. Interacts with EBA181 (via cytoplasmic domain); the interaction is weak. Interacts with G-actin and F-actin. May interact with ACT2/actin II; the interaction inhibits FBPA catalytic activity. Interacts with human SLC4A1/band 3 (via N-terminus); the interaction inhibits FBPA catalytic activity.

The protein localises to the cytoplasm. It is found in the membrane. The protein resides in the host cell membrane. The catalysed reaction is beta-D-fructose 1,6-bisphosphate = D-glyceraldehyde 3-phosphate + dihydroxyacetone phosphate. The protein operates within carbohydrate degradation; glycolysis; D-glyceraldehyde 3-phosphate and glycerone phosphate from D-glucose: step 4/4. Its activity is regulated as follows. The cytoplasmic tail of TRAP and probably other adhesins acts as a competitive inhibitor as the binding sites of the glycolytic substrate fructose 1,6-bisphosphate and TRAP partially overlap. In terms of biological role, plays a key role in glycolysis by catalyzing the cleavage of fructose 1,6-bisphosphate into dihydroxyacetone phosphate and glyceraldehyde 3-phosphate. Independently of its catalytic activity, connects the actin filaments, and thus the actomyosin motor, to cell surface adhesins of the thrombospondin-related anonymous protein (TRAP), the erythrocyte binding ligand (EBL) and reticulocyte binding homolog (RH) protein families; this interaction is probably involved in transducing the motor force across the parasite surface required for sporozoite and ookinete gliding motility and merozoite invasion. Stimulates actin polymerisation. The protein is Fructose-bisphosphate aldolase of Plasmodium falciparum (isolate 3D7).